Reading from the N-terminus, the 354-residue chain is Holliday junction branch migration complex subunit RuvB (354 aa).

The interval 4 to 190 is large ATPase domain (RuvB-L); the sequence is TDKLAAERII…FGIVARLEFY (187 aa). ATP is bound by residues Leu29, Arg30, Gly71, Lys74, Thr75, Thr76, 137-139, Arg180, Tyr190, and Arg227; that span reads EDY. Thr75 lines the Mg(2+) pocket. The small ATPAse domain (RuvB-S) stretch occupies residues 191 to 261; it reads DADQLARIVR…VADAALAMLD (71 aa). Residues 264–354 are head domain (RuvB-H); the sequence is PVGFDLMDRK…RGMWDTPAGK (91 aa). DNA contacts are provided by Arg300, Arg319, and Arg324.

It belongs to the RuvB family. Homohexamer. Forms an RuvA(8)-RuvB(12)-Holliday junction (HJ) complex. HJ DNA is sandwiched between 2 RuvA tetramers; dsDNA enters through RuvA and exits via RuvB. An RuvB hexamer assembles on each DNA strand where it exits the tetramer. Each RuvB hexamer is contacted by two RuvA subunits (via domain III) on 2 adjacent RuvB subunits; this complex drives branch migration. In the full resolvosome a probable DNA-RuvA(4)-RuvB(12)-RuvC(2) complex forms which resolves the HJ.

It is found in the cytoplasm. The enzyme catalyses ATP + H2O = ADP + phosphate + H(+). In terms of biological role, the RuvA-RuvB-RuvC complex processes Holliday junction (HJ) DNA during genetic recombination and DNA repair, while the RuvA-RuvB complex plays an important role in the rescue of blocked DNA replication forks via replication fork reversal (RFR). RuvA specifically binds to HJ cruciform DNA, conferring on it an open structure. The RuvB hexamer acts as an ATP-dependent pump, pulling dsDNA into and through the RuvAB complex. RuvB forms 2 homohexamers on either side of HJ DNA bound by 1 or 2 RuvA tetramers; 4 subunits per hexamer contact DNA at a time. Coordinated motions by a converter formed by DNA-disengaged RuvB subunits stimulates ATP hydrolysis and nucleotide exchange. Immobilization of the converter enables RuvB to convert the ATP-contained energy into a lever motion, pulling 2 nucleotides of DNA out of the RuvA tetramer per ATP hydrolyzed, thus driving DNA branch migration. The RuvB motors rotate together with the DNA substrate, which together with the progressing nucleotide cycle form the mechanistic basis for DNA recombination by continuous HJ branch migration. Branch migration allows RuvC to scan DNA until it finds its consensus sequence, where it cleaves and resolves cruciform DNA. This chain is Holliday junction branch migration complex subunit RuvB, found in Burkholderia ambifaria (strain MC40-6).